The primary structure comprises 514 residues: Lysine--tRNA ligase (514 aa).

Positions methionine 1–glutamine 13 are enriched in low complexity. The segment at methionine 1 to asparagine 21 is disordered. Residues glutamate 422 and glutamate 429 each contribute to the Mg(2+) site.

The protein belongs to the class-II aminoacyl-tRNA synthetase family. In terms of assembly, homodimer. The cofactor is Mg(2+).

It localises to the cytoplasm. It catalyses the reaction tRNA(Lys) + L-lysine + ATP = L-lysyl-tRNA(Lys) + AMP + diphosphate. In Psychrobacter cryohalolentis (strain ATCC BAA-1226 / DSM 17306 / VKM B-2378 / K5), this protein is Lysine--tRNA ligase.